A 347-amino-acid polypeptide reads, in one-letter code: Ribosomal RNA small subunit methyltransferase C (347 aa).

This sequence belongs to the methyltransferase superfamily. RsmC family. Monomer.

Its subcellular location is the cytoplasm. The catalysed reaction is guanosine(1207) in 16S rRNA + S-adenosyl-L-methionine = N(2)-methylguanosine(1207) in 16S rRNA + S-adenosyl-L-homocysteine + H(+). Specifically methylates the guanine in position 1207 of 16S rRNA in the 30S particle. This chain is Ribosomal RNA small subunit methyltransferase C, found in Shewanella baltica (strain OS185).